We begin with the raw amino-acid sequence, 1373 residues long: DNA-directed RNA polymerase subunit beta (1373 aa).

This sequence belongs to the RNA polymerase beta chain family. The RNAP catalytic core consists of 2 alpha, 1 beta, 1 beta' and 1 omega subunit. When a sigma factor is associated with the core the holoenzyme is formed, which can initiate transcription.

The enzyme catalyses RNA(n) + a ribonucleoside 5'-triphosphate = RNA(n+1) + diphosphate. Functionally, DNA-dependent RNA polymerase catalyzes the transcription of DNA into RNA using the four ribonucleoside triphosphates as substrates. The chain is DNA-directed RNA polymerase subunit beta from Rhodopseudomonas palustris (strain BisB18).